The sequence spans 411 residues: Formate-dependent phosphoribosylglycinamide formyltransferase (411 aa).

25–26 (EL) is a N(1)-(5-phospho-beta-D-ribosyl)glycinamide binding site. ATP-binding positions include arginine 118, lysine 159, 164–169 (SSGAGQ), 199–202 (EQYI), and glutamate 207. An ATP-grasp domain is found at 123–318 (TFAHDKLGLP…EFDLHARAIL (196 aa)). Residues glutamate 277 and glutamate 289 each coordinate Mg(2+). N(1)-(5-phospho-beta-D-ribosyl)glycinamide contacts are provided by residues aspartate 296, lysine 366, and 373 to 374 (RR).

It belongs to the PurK/PurT family. In terms of assembly, homodimer.

It catalyses the reaction N(1)-(5-phospho-beta-D-ribosyl)glycinamide + formate + ATP = N(2)-formyl-N(1)-(5-phospho-beta-D-ribosyl)glycinamide + ADP + phosphate + H(+). The protein operates within purine metabolism; IMP biosynthesis via de novo pathway; N(2)-formyl-N(1)-(5-phospho-D-ribosyl)glycinamide from N(1)-(5-phospho-D-ribosyl)glycinamide (formate route): step 1/1. Functionally, involved in the de novo purine biosynthesis. Catalyzes the transfer of formate to 5-phospho-ribosyl-glycinamide (GAR), producing 5-phospho-ribosyl-N-formylglycinamide (FGAR). Formate is provided by PurU via hydrolysis of 10-formyl-tetrahydrofolate. The sequence is that of Formate-dependent phosphoribosylglycinamide formyltransferase from Corynebacterium jeikeium (strain K411).